The following is a 493-amino-acid chain: Glutamyl-tRNA(Gln) amidotransferase subunit A (493 aa).

Active-site charge relay system residues include Lys-78 and Ser-158. Ser-182 (acyl-ester intermediate) is an active-site residue.

Belongs to the amidase family. GatA subfamily. As to quaternary structure, heterotrimer of A, B and C subunits.

The catalysed reaction is L-glutamyl-tRNA(Gln) + L-glutamine + ATP + H2O = L-glutaminyl-tRNA(Gln) + L-glutamate + ADP + phosphate + H(+). Allows the formation of correctly charged Gln-tRNA(Gln) through the transamidation of misacylated Glu-tRNA(Gln) in organisms which lack glutaminyl-tRNA synthetase. The reaction takes place in the presence of glutamine and ATP through an activated gamma-phospho-Glu-tRNA(Gln). The chain is Glutamyl-tRNA(Gln) amidotransferase subunit A from Rickettsia typhi (strain ATCC VR-144 / Wilmington).